Consider the following 271-residue polypeptide: Beta-lysine N(6)-acetyltransferase (271 aa).

Residues 86 to 122 (LRKDRGTGKNQKKKKISRKKDNWKKRKEKSRLPEGYT) are disordered. Positions 95–114 (NQKKKKISRKKDNWKKRKEK) are enriched in basic residues. One can recognise an N-acetyltransferase domain in the interval 121 to 269 (YTLRPAVQAD…GFEDMNIWCR (149 aa)).

Belongs to the acetyltransferase family.

It carries out the reaction (3S)-3,6-diaminohexanoate + acetyl-CoA = (3S)-6-acetamido-3-aminohexanoate + CoA + H(+). Catalyzes the acetylation of beta-lysine to N6-acetyl-beta-lysine, a compatible solute produced by methanogenic archaea that helps cells to cope with salt stress. This is Beta-lysine N(6)-acetyltransferase from Methanosarcina mazei (strain ATCC BAA-159 / DSM 3647 / Goe1 / Go1 / JCM 11833 / OCM 88) (Methanosarcina frisia).